The sequence spans 121 residues: Apoptin (121 aa).

Disordered regions lie at residues 1–28 (MNAL…LETP) and 57–121 (LRSA…CIRL). Over residues 58-70 (RSATADNSESTGF) the composition is skewed to polar residues. The span at 88–102 (RSCDPSEYRVSELKE) shows a compositional bias: basic and acidic residues.

Belongs to the gyrovirus apoptin family.

It is found in the host nucleus. Its function is as follows. May act as transcriptional regulator. Induces apoptosis in infected cells. Element of infectious replication cycle. This is Apoptin (VP3) from Gallus gallus (Chicken).